The following is a 429-amino-acid chain: Glucose-1-phosphate adenylyltransferase (429 aa).

Alpha-D-glucose 1-phosphate-binding positions include Y116, G181, 196–197 (EK), and S214.

This sequence belongs to the bacterial/plant glucose-1-phosphate adenylyltransferase family. In terms of assembly, homotetramer.

It catalyses the reaction alpha-D-glucose 1-phosphate + ATP + H(+) = ADP-alpha-D-glucose + diphosphate. It participates in glycan biosynthesis; glycogen biosynthesis. Involved in the biosynthesis of ADP-glucose, a building block required for the elongation reactions to produce glycogen. Catalyzes the reaction between ATP and alpha-D-glucose 1-phosphate (G1P) to produce pyrophosphate and ADP-Glc. This is Glucose-1-phosphate adenylyltransferase from Paramagnetospirillum magneticum (strain ATCC 700264 / AMB-1) (Magnetospirillum magneticum).